A 320-amino-acid chain; its full sequence is Lipoyl synthase (320 aa).

The segment at alanine 9–proline 31 is disordered. Residues alanine 12–proline 31 show a composition bias toward basic and acidic residues. Residues cysteine 60, cysteine 65, cysteine 71, cysteine 86, cysteine 90, cysteine 93, and serine 299 each coordinate [4Fe-4S] cluster. One can recognise a Radical SAM core domain in the interval tryptophan 72 to leucine 288.

Belongs to the radical SAM superfamily. Lipoyl synthase family. It depends on [4Fe-4S] cluster as a cofactor.

The protein localises to the cytoplasm. It carries out the reaction [[Fe-S] cluster scaffold protein carrying a second [4Fe-4S](2+) cluster] + N(6)-octanoyl-L-lysyl-[protein] + 2 oxidized [2Fe-2S]-[ferredoxin] + 2 S-adenosyl-L-methionine + 4 H(+) = [[Fe-S] cluster scaffold protein] + N(6)-[(R)-dihydrolipoyl]-L-lysyl-[protein] + 4 Fe(3+) + 2 hydrogen sulfide + 2 5'-deoxyadenosine + 2 L-methionine + 2 reduced [2Fe-2S]-[ferredoxin]. The protein operates within protein modification; protein lipoylation via endogenous pathway; protein N(6)-(lipoyl)lysine from octanoyl-[acyl-carrier-protein]: step 2/2. Catalyzes the radical-mediated insertion of two sulfur atoms into the C-6 and C-8 positions of the octanoyl moiety bound to the lipoyl domains of lipoate-dependent enzymes, thereby converting the octanoylated domains into lipoylated derivatives. In Methylobacterium nodulans (strain LMG 21967 / CNCM I-2342 / ORS 2060), this protein is Lipoyl synthase.